Here is a 380-residue protein sequence, read N- to C-terminus: Queuine tRNA-ribosyltransferase (380 aa).

The Proton acceptor role is filled by Asp96. Residues 96–100 (DSGGF), Asp150, Gln193, and Gly220 contribute to the substrate site. The interval 251-257 (GVGAPDS) is RNA binding. Asp270 (nucleophile) is an active-site residue. The segment at 275–279 (TRIAR) is RNA binding; important for wobble base 34 recognition. Zn(2+) is bound by residues Cys308, Cys310, Cys313, and His339.

Belongs to the queuine tRNA-ribosyltransferase family. As to quaternary structure, homodimer. Within each dimer, one monomer is responsible for RNA recognition and catalysis, while the other monomer binds to the replacement base PreQ1. Zn(2+) serves as cofactor.

The catalysed reaction is 7-aminomethyl-7-carbaguanine + guanosine(34) in tRNA = 7-aminomethyl-7-carbaguanosine(34) in tRNA + guanine. Its pathway is tRNA modification; tRNA-queuosine biosynthesis. Its function is as follows. Catalyzes the base-exchange of a guanine (G) residue with the queuine precursor 7-aminomethyl-7-deazaguanine (PreQ1) at position 34 (anticodon wobble position) in tRNAs with GU(N) anticodons (tRNA-Asp, -Asn, -His and -Tyr). Catalysis occurs through a double-displacement mechanism. The nucleophile active site attacks the C1' of nucleotide 34 to detach the guanine base from the RNA, forming a covalent enzyme-RNA intermediate. The proton acceptor active site deprotonates the incoming PreQ1, allowing a nucleophilic attack on the C1' of the ribose to form the product. After dissociation, two additional enzymatic reactions on the tRNA convert PreQ1 to queuine (Q), resulting in the hypermodified nucleoside queuosine (7-(((4,5-cis-dihydroxy-2-cyclopenten-1-yl)amino)methyl)-7-deazaguanosine). The chain is Queuine tRNA-ribosyltransferase from Streptococcus sanguinis (strain SK36).